An 827-amino-acid chain; its full sequence is Histone acetyltransferase MOF (827 aa).

4 disordered regions span residues 1 to 190, 237 to 276, 288 to 309, and 324 to 360; these read MSEA…SDTV, QLGL…AVYL, STPG…MPPP, and EAIS…TSRE. A compositionally biased stretch (acidic residues) spans 19 to 30; sequence PIEEEHEPEQEP. The span at 55 to 69 shows a compositional bias: polar residues; that stretch reads LDVSGSDQSAEQSLD. Residues 103-116 are compositionally biased toward low complexity; the sequence is SSTSTSSTRSSSSS. Positions 121-133 are enriched in acidic residues; sequence VSEAEEAPPEPEP. Positions 141–150 are enriched in basic and acidic residues; that stretch reads QEEKKEDGQD. The segment covering 176–186 has biased composition (acidic residues); that stretch reads DQEIETEDEPS. Residues 243–253 are compositionally biased toward pro residues; the sequence is AAPPPPPPPPA. Positions 326-350 are enriched in acidic residues; that stretch reads ISDDSSETSSSDDDEEEEEDEDDAL. A Glycyl lysine isopeptide (Lys-Gly) (interchain with G-Cter in ubiquitin) cross-link involves residue Lys372. Residues 382–433 form the Tudor-knot domain; the sequence is IYFIRREDGTVHRGQVLQSRTTENAAAPDEYYVHYVGLNRRLDGWVGRHRIS. Glycyl lysine isopeptide (Lys-Gly) (interchain with G-Cter in ubiquitin) cross-links involve residues Lys483, Lys532, and Lys539. An MYST-type HAT domain is found at 538-813; that stretch reads TKIKYIDKLQ…IDTDYLVWSP (276 aa). The C2HC MYST-type zinc-finger motif lies at 571 to 596; that stretch reads LYVCEYCLKYMRFRSSYAYHLHECDR. Residues Cys574, Cys577, His590, and Cys594 each contribute to the Zn(2+) site. Residue Lys638 is modified to N6-acetyllysine; by autocatalysis. 6 residues coordinate acetyl-CoA: Ile681, Arg689, Lys690, Gly691, Gly693, and Lys694. Glu714 functions as the Proton donor/acceptor in the catalytic mechanism. Residue Lys715 forms a Glycyl lysine isopeptide (Lys-Gly) (interchain with G-Cter in ubiquitin) linkage. 2 residues coordinate acetyl-CoA: Ser718 and Ser727. A Glycyl lysine isopeptide (Lys-Gly) (interchain with G-Cter in ubiquitin) cross-link involves residue Lys749. Tyr774 is an acetyl-CoA binding site. Glycyl lysine isopeptide (Lys-Gly) (interchain with G-Cter in ubiquitin) cross-links involve residues Lys776, Lys798, and Lys801. Acetyl-CoA is bound at residue Lys798.

The protein belongs to the MYST (SAS/MOZ) family. Component of the male-specific lethal (MSL) histone acetyltransferase complex, composed of mof, mle, msl-1, msl-2 and msl-3 proteins, as well as roX1 and roX2 non-coding RNAs. Component of a maternal MSL subcomplex composed of mof, msl-1 and msl-3. Component of the non-specific lethal (NLS) histone acetyltransferase complex at least composed of mof, nls1, dgt1/NSL2, Rcd1/NSL3, Rcd5/MCRS2, MBD-R2 and wds. In males, interacts with nucleoporin Mgtor. Autoacetylation at Lys-638 is required for binding histone H4 with high affinity and for proper function. In terms of processing, ubiquitinated by msl-2.

It localises to the nucleus. It is found in the chromosome. It carries out the reaction L-lysyl-[histone] + acetyl-CoA = N(6)-acetyl-L-lysyl-[histone] + CoA + H(+). In terms of biological role, histone acetyltransferase that catalyzes the formation of the majority of histone H4 acetylation at 'Lys-16' (H4K16ac), an epigenetic mark that prevents chromatin compaction and constitutes the only acetylation mark intergenerationally transmitted. Catalytic component of the male-specific lethal (MSL) complex, a multiprotein complex essential for elevating transcription of the single X chromosome in the male (X chromosome dosage compensation). The MSL complex specifically associates with the single X chromosome in males and mediates formation of H4K16ac, promoting a two-fold activation of X chromosome. Dosage compensation ensures that males with a single X chromosome have the same amount of most X-linked gene products as females with two X chromosomes. In oocytes, mof is also part of a maternal MSL subcomplex that mediates H4K16ac deposition for intergenerational transmission: H4K16ac prepares the chromatin landscape for establishment of nucleosome accessibility and poises genes for future activation. H4K16ac constitutes the only acetylation mark maintained from oocytes to fertilized embryos. Mof also constitutes the catalytic component of the non-specific lethal (NLS) complex, which promotes expression of housekeeping genes on X chromosome and autosomes. The NSL complex promotes strong expression of housekeeping genes compared to the two-fold expression mediated by the MSL complex on X chromosome, suggesting that the activation potential of mof is constrained in the context of dosage compensation. This chain is Histone acetyltransferase MOF, found in Drosophila melanogaster (Fruit fly).